Reading from the N-terminus, the 453-residue chain is Jacalin-related lectin 40 (453 aa).

Jacalin-type lectin domains are found at residues 1–142 (MAQK…YFTT), 154–296 (HIKL…YFSS), and 306–449 (PEKL…YVVP). N-acetylalanine is present on alanine 2.

The protein belongs to the jacalin lectin family. Expressed in roots.

In Arabidopsis thaliana (Mouse-ear cress), this protein is Jacalin-related lectin 40 (JAL40).